A 393-amino-acid chain; its full sequence is MGILGLSKLLYDRSPAAIRERELKNYFGRRIAIDASMTIYQFIIAMKGFQDGQGMELTNEAGEVTSHLNGLFARTLRMVDEGLRPIYVFDGKPPTLKASELQERRQRAEEAQQLFDTAKEEGNDELMEKMSKRTVRVSREQLEEAKKLLQLMGIPVVQAPSEAEAQCAELVKKKKAWAVATEDMDALTFGAPVMLRHLTYSEAKKRPIAEFHLDEILGITGLTMTQFIDLCILLGCDYVPKIPGIGPQKAWEGIKKHGDIETLLQSLDAGRHSVPEGFHYEEARQFFLKPEVTPAEEIEIQFREPDEEGLVKFLVEEKLFNKDRVLKGIQRLRNALTRKTQGRLDQFFTITRPVTKPNTCDAKAGVKRGHSAIALSGTLQQKGSSGHKKVVKK.

Residues 1 to 108 (MGILGLSKLL…SELQERRQRA (108 aa)) are N-domain. Residue Asp34 participates in Mg(2+) binding. Arg74 provides a ligand contact to DNA. 5 residues coordinate Mg(2+): Asp90, Glu162, Glu164, Asp183, and Asp185. The I-domain stretch occupies residues 126 to 257 (LMEKMSKRTV…QKAWEGIKKH (132 aa)). DNA is bound at residue Glu162. DNA contacts are provided by Gly235 and Asp237. A Mg(2+)-binding site is contributed by Asp237. An interaction with PCNA region spans residues 340–348 (TQGRLDQFF).

The protein belongs to the XPG/RAD2 endonuclease family. FEN1 subfamily. As to quaternary structure, interacts with PCNA. Three molecules of FEN1 bind to one PCNA trimer with each molecule binding to one PCNA monomer. PCNA stimulates the nuclease activity without altering cleavage specificity. Requires Mg(2+) as cofactor. In terms of processing, phosphorylated. Phosphorylation upon DNA damage induces relocalization to the nuclear plasma.

The protein localises to the nucleus. It is found in the nucleolus. Its subcellular location is the nucleoplasm. The protein resides in the mitochondrion. Functionally, structure-specific nuclease with 5'-flap endonuclease and 5'-3' exonuclease activities involved in DNA replication and repair. During DNA replication, cleaves the 5'-overhanging flap structure that is generated by displacement synthesis when DNA polymerase encounters the 5'-end of a downstream Okazaki fragment. It enters the flap from the 5'-end and then tracks to cleave the flap base, leaving a nick for ligation. Also involved in the long patch base excision repair (LP-BER) pathway, by cleaving within the apurinic/apyrimidinic (AP) site-terminated flap. Acts as a genome stabilization factor that prevents flaps from equilibrating into structures that lead to duplications and deletions. Also possesses 5'-3' exonuclease activity on nicked or gapped double-stranded DNA, and exhibits RNase H activity. Also involved in replication and repair of rDNA and in repairing mitochondrial DNA. The polypeptide is Flap endonuclease 1 (Trypanosoma cruzi (strain CL Brener)).